Consider the following 299-residue polypeptide: tRNA dimethylallyltransferase (299 aa).

13 to 20 (GPTASGKT) is a binding site for ATP. 15-20 (TASGKT) serves as a coordination point for substrate. The tract at residues 38–41 (DSRQ) is interaction with substrate tRNA.

It belongs to the IPP transferase family. In terms of assembly, monomer. It depends on Mg(2+) as a cofactor.

The enzyme catalyses adenosine(37) in tRNA + dimethylallyl diphosphate = N(6)-dimethylallyladenosine(37) in tRNA + diphosphate. In terms of biological role, catalyzes the transfer of a dimethylallyl group onto the adenine at position 37 in tRNAs that read codons beginning with uridine, leading to the formation of N6-(dimethylallyl)adenosine (i(6)A). In Prochlorococcus marinus (strain SARG / CCMP1375 / SS120), this protein is tRNA dimethylallyltransferase.